We begin with the raw amino-acid sequence, 1033 residues long: SGGFDFSFLPQPPQEKAHDGGRYYLGPGPMGLMGPRGPPGASGAPGPQGFQGPAGEPGEPGQTGPAGARGPAGPPGKGVVGPQGARGFPGTPGLPGFKGIRGHNGLDGLKGQPGAPGVKGEPGAPGENGTPGQTGARGLPGERGRVGAPGPAGSRGSDGSVGPVGPAGPIGSAGPPGFPGAPGPKGELGPVGNTGPSGPAGPRGEQGLPGVSGPVGPPGNPGANGLTGAKGAAGLPGVAGAPGLPGPRGIPGPVGASGATGARGLVGEPGPAGSKGESGGKGEPGSAGPQGPPGSSGEEGKRGPSGESGSTGPTGPPGLRGGPGSRGLPGADGRAGVIGPAGARGASGPAGVRGPSGDTGRPGEPGLMGARGLPGSPGNVGPAGKEGPAGLPGIDGRPGPIGPAGARGEAGNIGFPGPKGPAGDPGKAGEKGHAGLAGNRGAPGPDGNNGAQGPPGLQGVQGGKGEQGPAGPPGFQGLPGPAGTTGEAGKPGERGIPGEFGLPGPAGPRGERGSGAVGPSGAIGSRGPSGPPGPDGNKGEPGVVGAPGTAGPAGSGGLPGERGAAGIPGGKGEKGETGLRGEVGTTGRDGARGAPGAVGAPGPAGATGDRGEAGAAGPAGPAGPRGSPGERGEVGPAGPNGFAGPAGAAGQPGAKGERGTKGPKGENGIVGPTGPVGSAGPAGPNGPAGPAGSRGDGGPPGVTGFPGAAGRTGPPGPSGITGPPGPPGAAGKEGLRGPRGDQGPVGRTGETGAGGPPGFTGEKGPSGEPGTAGPPGTAGPQGLLGAPGILGLPGSRGERGLPGVAGAVGEPGPLGIGPPGARGPSGGVGPGVNGAPGEAGRDGNPGSDGPPGRDGLPGHKGERGYAGNGPVGAAGAPGPHGAVGPAGKHGNRGEPGPVGSAGPVGALGPRGPSGPQGIRGDKGEAGDKGPRGLPGLKGHNGLQGLPGLAGQHGDQGSPGPVGPAGPRGPAGPSGPPGKDGRTGHPGAVGPAGIRGSQGSQGPSGPPGPPGPPGPPGASGGGYDFGYEGDFYRA.

Residues 1 to 1033 (SGGFDFSFLP…FGYEGDFYRA (1033 aa)) are disordered. 3 stretches are compositionally biased toward low complexity: residues 25–71 (LGPG…ARGP), 154–175 (SRGSDGSVGPVGPAGPIGSAGP), and 221–242 (PGANGLTGAKGAAGLPGVAGAP). Gly residues predominate over residues 276-285 (GESGGKGEPG). Residues 286–296 (SAGPQGPPGSS) are compositionally biased toward low complexity. Residues 318–327 (GLRGGPGSRG) show a composition bias toward gly residues. Low complexity-rich tracts occupy residues 340–356 (PAGARGASGPAGVRGPS) and 391–410 (LPGIDGRPGPIGPAGARGEA). A compositionally biased stretch (gly residues) spans 459-468 (GVQGGKGEQG). Composition is skewed to low complexity over residues 519–528 (PSGAIGSRGP) and 540–550 (EPGVVGAPGTA). Residues 551 to 560 (GPAGSGGLPG) are compositionally biased toward gly residues. Low complexity-rich tracts occupy residues 583–627 (VGTT…PRGS) and 634–654 (VGPAGPNGFAGPAGAAGQPGA). The span at 655 to 664 (KGERGTKGPK) shows a compositional bias: basic and acidic residues. Low complexity predominate over residues 672–682 (PTGPVGSAGPA). Residues 692-701 (GSRGDGGPPG) are compositionally biased toward gly residues. Positions 703–712 (TGFPGAAGRT) are enriched in low complexity. The segment covering 749–758 (GETGAGGPPG) has biased composition (gly residues). Low complexity-rich tracts occupy residues 766–793 (SGEPGTAGPPGTAGPQGLLGAPGILGLP) and 801–811 (LPGVAGAVGEP). Gly residues predominate over residues 812 to 834 (GPLGIGPPGARGPSGGVGPGVNG). Low complexity predominate over residues 873–909 (AAGAPGPHGAVGPAGKHGNRGEPGPVGSAGPVGALGP). A compositionally biased stretch (basic and acidic residues) spans 919 to 930 (RGDKGEAGDKGP). Over residues 1003 to 1015 (SGPPGPPGPPGPP) the composition is skewed to pro residues.

This sequence belongs to the fibrillar collagen family. As to quaternary structure, trimers of one alpha 2(I) and two alpha 1(I) chains. Interacts (via C-terminus) with TMEM131 (via PapD-L domain); the interaction is direct and is involved in assembly and TRAPPIII ER-to-Golgi transport complex-dependent secretion of collagen. Post-translationally, prolines at the third position of the tripeptide repeating unit (G-X-Y) are hydroxylated in some or all of the chains. Expressed in bone.

It is found in the secreted. Its subcellular location is the extracellular space. The protein resides in the extracellular matrix. Functionally, type I collagen is a member of group I collagen (fibrillar forming collagen). In Mylodon darwinii (Giant ground sloth), this protein is Collagen alpha-2(I) chain.